A 293-amino-acid chain; its full sequence is Rhomboid-like protease 1 (293 aa).

The segment at 18 to 40 (EHTPLYNAETGSRDSDSTSSGGA) is disordered. 6 helical membrane-spanning segments follow: residues 62-82 (VVLAISIVDWIFYIVTVCLDT), 112-132 (LLLPVFLHANFFHVFFNVFFQ), 148-168 (FTGLYFASAIYGNLLSATAFF), 174-194 (VGASTAGFGLIGIQICEMALT), 217-237 (LLMFTLNGGSIDQMGHLGGLL), and 262-282 (AAAIGILLALPAACFPILYAV). Catalysis depends on Ser177, which acts as the Nucleophile. Residue His232 is part of the active site.

The protein belongs to the peptidase S54 family.

It localises to the cytoplasmic vesicle. The protein resides in the secretory vesicle. It is found in the microneme membrane. It catalyses the reaction Cleaves type-1 transmembrane domains using a catalytic dyad composed of serine and histidine that are contributed by different transmembrane domains.. Its function is as follows. Serine protease involved in intramembrane proteolysis and the subsequent release of polypeptides from their membrane anchors. Has no detectable activity towards MIC2. This is Rhomboid-like protease 1 (ROM1) from Toxoplasma gondii.